Reading from the N-terminus, the 317-residue chain is Ribonuclease Z (317 aa).

Zn(2+)-binding residues include histidine 61, histidine 63, aspartate 65, histidine 66, histidine 139, aspartate 210, and histidine 268. Aspartate 65 acts as the Proton acceptor in catalysis.

Belongs to the RNase Z family. In terms of assembly, homodimer. It depends on Zn(2+) as a cofactor.

The enzyme catalyses Endonucleolytic cleavage of RNA, removing extra 3' nucleotides from tRNA precursor, generating 3' termini of tRNAs. A 3'-hydroxy group is left at the tRNA terminus and a 5'-phosphoryl group is left at the trailer molecule.. Inhibited by high salt concentrations. Its function is as follows. Zinc phosphodiesterase, which displays some tRNA 3'-processing endonuclease activity. Probably involved in tRNA maturation, by removing a 3'-trailer from precursor tRNA. Can also catalyze the 5' end cleavage of the 5S rRNA. The chain is Ribonuclease Z from Haloferax volcanii (strain ATCC 29605 / DSM 3757 / JCM 8879 / NBRC 14742 / NCIMB 2012 / VKM B-1768 / DS2) (Halobacterium volcanii).